Here is a 77-residue protein sequence, read N- to C-terminus: MESLMRLFLLLALLSSSHAGPKVTLQVKLTETFQDKTSQNSSALDMLQKICLLLHLPSGTNVTLLHKGPPHYLTCRA.

Positions 1–19 (MESLMRLFLLLALLSSSHA) are cleaved as a signal peptide. Residue Asn61 is glycosylated (N-linked (GlcNAc...) asparagine).

Post-translationally, N-glycosylated. As to expression, expressed in lung, and specifically in alveolar type II epithelial cells.

The protein localises to the secreted. The protein resides in the cytoplasmic vesicle. It localises to the secretory vesicle. Its subcellular location is the golgi apparatus. Its function is as follows. Putative surfactant protein. In Mus musculus (Mouse), this protein is Surfactant-associated protein 2.